A 188-amino-acid polypeptide reads, in one-letter code: F-box only protein 36 (188 aa).

Residues 91–137 enclose the F-box domain; it reads FDFLERLSDDLLLTIISYLDLEDIARLCQTSHRFAKLCMSDKLWEQI.

As to quaternary structure, directly interacts with SKP1 and CUL1.

Functionally, substrate-recognition component of the SCF (SKP1-CUL1-F-box protein)-type E3 ubiquitin ligase complex. The polypeptide is F-box only protein 36 (FBXO36) (Homo sapiens (Human)).